We begin with the raw amino-acid sequence, 372 residues long: GTPase Obg (372 aa).

Residues 1-159 enclose the Obg domain; the sequence is MKFIDEARIE…RMLKLELKVL (159 aa). Residues 128-147 form a disordered region; the sequence is LHFKSSTNRAPRQKTDGKPG. The OBG-type G domain maps to 160–334; the sequence is ADVGLLGMPN…LVYAIHDYLV (175 aa). Residues 166-173, 191-195, 213-216, 284-287, and 315-317 each bind GTP; these read GMPNAGKS, FTTLA, DIPG, NKLD, and SAL. 2 residues coordinate Mg(2+): S173 and T193.

It belongs to the TRAFAC class OBG-HflX-like GTPase superfamily. OBG GTPase family. In terms of assembly, monomer. It depends on Mg(2+) as a cofactor.

The protein resides in the cytoplasm. An essential GTPase which binds GTP, GDP and possibly (p)ppGpp with moderate affinity, with high nucleotide exchange rates and a fairly low GTP hydrolysis rate. Plays a role in control of the cell cycle, stress response, ribosome biogenesis and in those bacteria that undergo differentiation, in morphogenesis control. In Burkholderia mallei (strain NCTC 10247), this protein is GTPase Obg.